A 209-amino-acid chain; its full sequence is Potassium-transporting ATPase KdpC subunit (209 aa).

The chain crosses the membrane as a helical span at residues 11-31 (MILALTVLTGLAYPLAVTAVA). Residues 188–209 (AQAPTPRQPEPGHPEPGRPEVR) form a disordered region. Residues 197–209 (EPGHPEPGRPEVR) are compositionally biased toward basic and acidic residues.

It belongs to the KdpC family. The system is composed of three essential subunits: KdpA, KdpB and KdpC.

Its subcellular location is the cell inner membrane. Its function is as follows. Part of the high-affinity ATP-driven potassium transport (or Kdp) system, which catalyzes the hydrolysis of ATP coupled with the electrogenic transport of potassium into the cytoplasm. This subunit acts as a catalytic chaperone that increases the ATP-binding affinity of the ATP-hydrolyzing subunit KdpB by the formation of a transient KdpB/KdpC/ATP ternary complex. This chain is Potassium-transporting ATPase KdpC subunit, found in Rhodospirillum centenum (strain ATCC 51521 / SW).